Here is a 428-residue protein sequence, read N- to C-terminus: Glutamate--tRNA ligase 2 (428 aa).

A 'HIGH' region motif is present at residues 6 to 16; that stretch reads PSPTGDMRTEQ.

The protein belongs to the class-I aminoacyl-tRNA synthetase family. Glutamate--tRNA ligase type 1 subfamily. In terms of assembly, monomer.

The protein resides in the cytoplasm. It carries out the reaction tRNA(Glu) + L-glutamate + ATP = L-glutamyl-tRNA(Glu) + AMP + diphosphate. In terms of biological role, catalyzes the attachment of glutamate to tRNA(Glu) in a two-step reaction: glutamate is first activated by ATP to form Glu-AMP and then transferred to the acceptor end of tRNA(Glu). The chain is Glutamate--tRNA ligase 2 from Sulfurovum sp. (strain NBC37-1).